A 280-amino-acid chain; its full sequence is Mastin (280 aa).

Positions 1–15 (MLWLLVLTAPWLGGS) are cleaved as a signal peptide. A propeptide spanning residues 16–30 (VPISPDPGLRHEQVG) is cleaved from the precursor. Residues 31–275 (IVGGCKVPAR…YVSWIHQHIP (245 aa)) form the Peptidase S1 domain. Cys62 and Cys78 are joined by a disulfide. The active-site Charge relay system is the His77. 2 N-linked (GlcNAc...) asparagine glycosylation sites follow: Asn106 and Asn117. Asp127 (charge relay system) is an active-site residue. 3 cysteine pairs are disulfide-bonded: Cys161-Cys234, Cys194-Cys215, and Cys224-Cys252. The active-site Charge relay system is the Ser228.

The protein belongs to the peptidase S1 family. Oligomer; disulfide-linked. Post-translationally, N-glycosylated. Mononuclear cells within skin, intestine, trachea and lung parenchyma, and polymorphonuclear leukocytes within capillaries and blood.

The protein localises to the cytoplasm. Its activity is regulated as follows. Inhibited by leupeptin and bis(5-amidino-2-benzimidazolyl)methane (BABIM). Trypsin-like serine protease. Has a preference for extended substrates with basic residues at the P1 position; Arg is preferred over Lys. Active towards calcitonin gene-related peptide and gelatin. Not active towards substance P, vasoactive intestinal peptide, type I collagen or azocasein. This Canis lupus familiaris (Dog) protein is Mastin.